A 597-amino-acid chain; its full sequence is DNA mismatch repair protein MutL (597 aa).

It belongs to the DNA mismatch repair MutL/HexB family.

Functionally, this protein is involved in the repair of mismatches in DNA. It is required for dam-dependent methyl-directed DNA mismatch repair. May act as a 'molecular matchmaker', a protein that promotes the formation of a stable complex between two or more DNA-binding proteins in an ATP-dependent manner without itself being part of a final effector complex. This chain is DNA mismatch repair protein MutL, found in Rhodopseudomonas palustris (strain HaA2).